A 610-amino-acid polypeptide reads, in one-letter code: Autophagy-related protein 22-1 (610 aa).

The interval 1-29 is disordered; that stretch reads MIFTSTPPAPPPADAQQRQPRYPGEDTTP. A helical membrane pass occupies residues 41 to 61; it reads YGIAAEVFAVCGVGSFLPLTL. The N-linked (GlcNAc...) asparagine glycan is linked to asparagine 90. 3 consecutive transmembrane segments (helical) span residues 120-140, 153-173, and 177-197; these read SFAM…LISF, LLLT…FISP, and ILGA…FVVL. The segment at 216–242 is disordered; it reads KTEGEELPHLDSSGEYTRSGSFNRGDN. The span at 229-239 shows a compositional bias: polar residues; that stretch reads GEYTRSGSFNR. The next 4 helical transmembrane spans lie at 277–297, 310–330, 379–399, and 415–435; these read GVGL…LLLF, TLPL…FTVV, VVIF…VSGT, and VGLL…LWPV. A glycan (N-linked (GlcNAc...) asparagine) is linked at asparagine 445. 4 helical membrane-spanning segments follow: residues 450-470, 485-507, 527-547, and 550-570; these read LCIA…IPLV, FPLG…SFFG, KGSS…TGQV, and GFFF…MVNA. The tract at residues 586–610 is disordered; it reads KSHGENSSEFGHPSEEAEGLLARNP. Asparagine 591 is a glycosylation site (N-linked (GlcNAc...) asparagine).

Belongs to the ATG22 family.

It localises to the vacuole membrane. Its function is as follows. Vacuolar effluxer which mediate the efflux of amino acids resulting from autophagic degradation. The release of autophagic amino acids allows the maintenance of protein synthesis and viability during nitrogen starvation. This is Autophagy-related protein 22-1 (atg22-1) from Aspergillus clavatus (strain ATCC 1007 / CBS 513.65 / DSM 816 / NCTC 3887 / NRRL 1 / QM 1276 / 107).